The chain runs to 158 residues: 2-C-methyl-D-erythritol 2,4-cyclodiphosphate synthase (158 aa).

D9 and H11 together coordinate a divalent metal cation. 4-CDP-2-C-methyl-D-erythritol 2-phosphate is bound by residues 9 to 11 (DVH) and 35 to 36 (HS). H43 lines the a divalent metal cation pocket. 4-CDP-2-C-methyl-D-erythritol 2-phosphate is bound by residues 57 to 59 (DIG), 62 to 66 (FPDTD), 133 to 136 (TTTE), F140, and R143.

The protein belongs to the IspF family. In terms of assembly, homotrimer. Requires a divalent metal cation as cofactor.

The enzyme catalyses 4-CDP-2-C-methyl-D-erythritol 2-phosphate = 2-C-methyl-D-erythritol 2,4-cyclic diphosphate + CMP. The protein operates within isoprenoid biosynthesis; isopentenyl diphosphate biosynthesis via DXP pathway; isopentenyl diphosphate from 1-deoxy-D-xylulose 5-phosphate: step 4/6. Involved in the biosynthesis of isopentenyl diphosphate (IPP) and dimethylallyl diphosphate (DMAPP), two major building blocks of isoprenoid compounds. Catalyzes the conversion of 4-diphosphocytidyl-2-C-methyl-D-erythritol 2-phosphate (CDP-ME2P) to 2-C-methyl-D-erythritol 2,4-cyclodiphosphate (ME-CPP) with a corresponding release of cytidine 5-monophosphate (CMP). This chain is 2-C-methyl-D-erythritol 2,4-cyclodiphosphate synthase, found in Haemophilus influenzae (strain PittGG).